A 334-amino-acid chain; its full sequence is D-alanine--D-alanine ligase (334 aa).

The ATP-grasp domain occupies 124–329; sequence KMWFSALGIP…FAQYLSGNIL (206 aa). An ATP-binding site is contributed by 154–209; that stretch reads ALAKWGSIFIKAASQGSSVGCYRVDSIEQLASSLEEAFTFSPYVVIEKTITARELE. Residues D283, E296, and N298 each contribute to the Mg(2+) site.

Belongs to the D-alanine--D-alanine ligase family. It depends on Mg(2+) as a cofactor. Requires Mn(2+) as cofactor.

The protein localises to the cytoplasm. It catalyses the reaction 2 D-alanine + ATP = D-alanyl-D-alanine + ADP + phosphate + H(+). The protein operates within cell wall biogenesis; peptidoglycan biosynthesis. Functionally, cell wall formation. The polypeptide is D-alanine--D-alanine ligase (Shewanella pealeana (strain ATCC 700345 / ANG-SQ1)).